Reading from the N-terminus, the 447-residue chain is Divalent metal cation transporter MntH (447 aa).

The next 11 membrane-spanning stretches (helical) occupy residues 26-48, 65-85, 108-128, 140-160, 169-189, 212-232, 264-284, 304-324, 359-379, 383-403, and 426-446; these read AGFW…GYMD, TLLS…AMSA, GFLL…AEII, IPLI…LLLM, AIVA…VLLS, MLYL…LYLG, LFLA…LFYG, IVGA…LLAS, VLSV…EAKI, LTFS…PLVI, and TATI…LGLI.

The protein belongs to the NRAMP family.

It localises to the cell membrane. In terms of biological role, h(+)-stimulated, divalent metal cation uptake system. The sequence is that of Divalent metal cation transporter MntH from Pediococcus pentosaceus (strain ATCC 25745 / CCUG 21536 / LMG 10740 / 183-1w).